Consider the following 204-residue polypeptide: Leucyl/phenylalanyl-tRNA--protein transferase (204 aa).

Belongs to the L/F-transferase family.

The protein resides in the cytoplasm. The enzyme catalyses N-terminal L-lysyl-[protein] + L-leucyl-tRNA(Leu) = N-terminal L-leucyl-L-lysyl-[protein] + tRNA(Leu) + H(+). It carries out the reaction N-terminal L-arginyl-[protein] + L-leucyl-tRNA(Leu) = N-terminal L-leucyl-L-arginyl-[protein] + tRNA(Leu) + H(+). The catalysed reaction is L-phenylalanyl-tRNA(Phe) + an N-terminal L-alpha-aminoacyl-[protein] = an N-terminal L-phenylalanyl-L-alpha-aminoacyl-[protein] + tRNA(Phe). Functionally, functions in the N-end rule pathway of protein degradation where it conjugates Leu, Phe and, less efficiently, Met from aminoacyl-tRNAs to the N-termini of proteins containing an N-terminal arginine or lysine. In Brucella anthropi (strain ATCC 49188 / DSM 6882 / CCUG 24695 / JCM 21032 / LMG 3331 / NBRC 15819 / NCTC 12168 / Alc 37) (Ochrobactrum anthropi), this protein is Leucyl/phenylalanyl-tRNA--protein transferase.